Reading from the N-terminus, the 521-residue chain is Protein PLM2 (521 aa).

Residues 1–63 (MSHLFPPSSP…SIGRQSSPVK (63 aa)) are disordered. Polar residues predominate over residues 51-63 (PSSSIGRQSSPVK). One can recognise an FHA domain in the interval 102–156 (LAIGRKKSVCNIILPCRKNISRQHAFISYAADRNEIKLECNGTNGLSVHLPYSMQ). Phosphoserine occurs at positions 281, 295, 302, and 384.

It belongs to the PLM2/TOS4 family. Phosphorylated by CDC28.

The protein resides in the nucleus. Functionally, binds to the promoters of genes with functions important for the G1/S (start) transition; primarily genes involved in DNA synthesis and repair, chromosome segregation, nuclear division and transcription. This Saccharomyces cerevisiae (strain ATCC 204508 / S288c) (Baker's yeast) protein is Protein PLM2 (PLM2).